The following is a 328-amino-acid chain: UDP-glucose 4-epimerase (328 aa).

Residues 20-21 (FV), 41-46 (VRHAVN), 57-58 (DI), 77-81 (CAARA), serine 123, tyrosine 149, and lysine 153 contribute to the NAD(+) site. The substrate site is built by serine 123 and tyrosine 149. The Proton acceptor role is filled by tyrosine 149. Substrate-binding positions include 198–199 (GI) and 215–217 (SIN).

Belongs to the NAD(P)-dependent epimerase/dehydratase family. As to quaternary structure, homodimer. NAD(+) serves as cofactor.

The enzyme catalyses UDP-alpha-D-glucose = UDP-alpha-D-galactose. It functions in the pathway bacterial outer membrane biogenesis; LPS O-antigen biosynthesis. Functionally, involved in the metabolism of galactose. Catalyzes the conversion of UDP-galactose (UDP-Gal) to UDP-glucose (UDP-Glc) through a mechanism involving the transient reduction of NAD. In Vibrio cholerae, this protein is UDP-glucose 4-epimerase (galE).